A 181-amino-acid polypeptide reads, in one-letter code: Probable RNA 2'-phosphotransferase (181 aa).

Belongs to the KptA/TPT1 family.

Its function is as follows. Removes the 2'-phosphate from RNA via an intermediate in which the phosphate is ADP-ribosylated by NAD followed by a presumed transesterification to release the RNA and generate ADP-ribose 1''-2''-cyclic phosphate (APPR&gt;P). May function as an ADP-ribosylase. The protein is Probable RNA 2'-phosphotransferase of Acaryochloris marina (strain MBIC 11017).